The primary structure comprises 1220 residues: Osmosensing histidine protein kinase SLN1 (1220 aa).

Topologically, residues M1–Q22 are cytoplasmic. The chain crosses the membrane as a helical span at residues L23–F46. At T47–K333 the chain is on the extracellular side. N-linked (GlcNAc...) asparagine glycosylation is found at N100, N138, N142, N181, N224, and N272. The chain crosses the membrane as a helical span at residues I334 to A354. The Cytoplasmic portion of the chain corresponds to H355 to K1220. 2 disordered regions span residues G414–F433 and N444–T500. Positions S451–I468 are enriched in basic and acidic residues. The residue at position 502 (S502) is a Phosphoserine. The 356-residue stretch at N573–Q928 folds into the Histidine kinase domain. At H576 the chain carries Phosphohistidine; by autocatalysis. Phosphoserine occurs at positions 758 and 833. Disordered stretches follow at residues A960–G1016 and N1040–D1081. Polar residues predominate over residues S965–N984. Residues P988–D1000 show a composition bias toward basic and acidic residues. A phosphoserine mark is found at S1041 and S1044. The span at L1063–I1075 shows a compositional bias: polar residues. A Response regulatory domain is found at K1089–C1210. Positions 1094, 1095, 1144, and 1195 each coordinate Mg(2+). D1144 carries the 4-aspartylphosphate modification.

As to quaternary structure, interacts with DJP1, MOG1 and YPD1. In terms of processing, the phosphorelay mechanism involves the sequential transfer of a phosphate group from His-576 (H1) in the histidine kinase domain (transmitter domain) to Asp-1144 (D1) of the response regulatory domain (receiver domain). This transfer probably occurs between two SLN1 molecules, rather than intramolecularly. The phosphate group is further transferred to 'His-64' (H2) of YPD1 and finally to 'Asp-554' (D2) of SSK1 or 'Asp-427' (D2) of SKN7.

The protein resides in the cell membrane. The catalysed reaction is ATP + protein L-histidine = ADP + protein N-phospho-L-histidine.. In terms of biological role, histidine kinase that acts as an osmosensor at the plasma membrane. Part of the bifurcated SLN1-YPD1-SKN7/SSK1 two-component regulatory system, which controls activity of the HOG1 pathway and gene expression in response to changes in the osmolarity of the extracellular environment. Under normal osmotic conditions, the histidine kinase autophosphorylates His-576. This phosphate is subsequently transferred to Asp-1144, from where it is relayed to 'His-64' of the phosphorelay intermediate protein YPD1. Under high osmolarity conditions, the histidine kinase is no longer active. The sequence is that of Osmosensing histidine protein kinase SLN1 (SLN1) from Saccharomyces cerevisiae (strain ATCC 204508 / S288c) (Baker's yeast).